Here is a 377-residue protein sequence, read N- to C-terminus: Protein ECM9 (377 aa).

Its function is as follows. May be involved in cell wall organization and biogenesis. The polypeptide is Protein ECM9 (ECM9) (Saccharomyces cerevisiae (strain ATCC 204508 / S288c) (Baker's yeast)).